The primary structure comprises 391 residues: Formate-dependent phosphoribosylglycinamide formyltransferase (391 aa).

N(1)-(5-phospho-beta-D-ribosyl)glycinamide is bound by residues 18–19 and E78; that span reads EL. ATP is bound by residues R110, K151, 156 to 161, 191 to 194, and E199; these read SSGKGQ and EEFI. Residues 115–305 form the ATP-grasp domain; sequence ELAHEELGIR…EFELHLRAIL (191 aa). Positions 264 and 276 each coordinate Mg(2+). N(1)-(5-phospho-beta-D-ribosyl)glycinamide contacts are provided by residues D283, K353, and 360–361; that span reads RR.

This sequence belongs to the PurK/PurT family. As to quaternary structure, homodimer.

It carries out the reaction N(1)-(5-phospho-beta-D-ribosyl)glycinamide + formate + ATP = N(2)-formyl-N(1)-(5-phospho-beta-D-ribosyl)glycinamide + ADP + phosphate + H(+). The protein operates within purine metabolism; IMP biosynthesis via de novo pathway; N(2)-formyl-N(1)-(5-phospho-D-ribosyl)glycinamide from N(1)-(5-phospho-D-ribosyl)glycinamide (formate route): step 1/1. Its function is as follows. Involved in the de novo purine biosynthesis. Catalyzes the transfer of formate to 5-phospho-ribosyl-glycinamide (GAR), producing 5-phospho-ribosyl-N-formylglycinamide (FGAR). Formate is provided by PurU via hydrolysis of 10-formyl-tetrahydrofolate. The chain is Formate-dependent phosphoribosylglycinamide formyltransferase from Trichormus variabilis (strain ATCC 29413 / PCC 7937) (Anabaena variabilis).